The primary structure comprises 436 residues: 3-ketoacyl-CoA thiolase (436 aa).

Cys99 functions as the Acyl-thioester intermediate in the catalytic mechanism. Residues His392 and Cys422 each act as proton acceptor in the active site.

This sequence belongs to the thiolase-like superfamily. Thiolase family. As to quaternary structure, heterotetramer of two alpha chains (FadJ) and two beta chains (FadI).

Its subcellular location is the cytoplasm. The enzyme catalyses an acyl-CoA + acetyl-CoA = a 3-oxoacyl-CoA + CoA. Its pathway is lipid metabolism; fatty acid beta-oxidation. Functionally, catalyzes the final step of fatty acid oxidation in which acetyl-CoA is released and the CoA ester of a fatty acid two carbons shorter is formed. This chain is 3-ketoacyl-CoA thiolase, found in Shewanella woodyi (strain ATCC 51908 / MS32).